A 338-amino-acid polypeptide reads, in one-letter code: Fructose-1,6-bisphosphatase class 1 (338 aa).

Mg(2+)-binding residues include Glu92, Asp115, Leu117, and Asp118. Residues 118–121, Asn211, Tyr244, 262–264, and Lys274 each bind substrate; these read DGSS and YLY. Glu280 is a binding site for Mg(2+).

The protein belongs to the FBPase class 1 family. In terms of assembly, homotetramer. Mg(2+) serves as cofactor.

The protein resides in the cytoplasm. It catalyses the reaction beta-D-fructose 1,6-bisphosphate + H2O = beta-D-fructose 6-phosphate + phosphate. It functions in the pathway carbohydrate biosynthesis; gluconeogenesis. This is Fructose-1,6-bisphosphatase class 1 from Vibrio vulnificus (strain YJ016).